We begin with the raw amino-acid sequence, 269 residues long: Histone deacetylase HDT1 (269 aa).

Residues 97 to 269 (PFEEEEDDED…HSKAKHSAGK (173 aa)) are disordered. 2 stretches are compositionally biased toward acidic residues: residues 98–115 (FEEEEDDEDDYDESDEDI) and 153–179 (KDDEDESSDDDDSDMGEDEDDSDDSEE). The segment covering 228–238 (PSKQASKTPKS) has biased composition (polar residues). The segment at 242 to 265 (HHCKPCNRSFGSEGALDSHSKAKH) adopts a C2H2-type zinc-finger fold.

Belongs to the histone deacetylase HD2 family. As to expression, predominantly expressed in ovaries. Accumulates predominantly in the micropylar region of the ovule's integument.

It is found in the nucleus. It localises to the nucleolus. In terms of biological role, mediates the deacetylation of lysine residues on the N-terminal part of the core histones (H2A, H2B, H3 and H4). Histone deacetylation gives a tag for epigenetic repression and plays an important role in transcriptional regulation, cell cycle progression and developmental events. This chain is Histone deacetylase HDT1 (HDT1), found in Solanum chacoense (Chaco potato).